Consider the following 714-residue polypeptide: Developmentally-regulated protein kinase 1 (714 aa).

2 disordered regions span residues 88 to 122 (NNNI…NNFN) and 174 to 266 (CNMI…IINN). Low complexity-rich tracts occupy residues 174 to 200 (CNMI…NNNN), 209 to 227 (PSSN…TTSS), and 240 to 266 (NFNQ…IINN). The region spanning 334-589 (FNFYGSLGSG…SCSIRNHKWF (256 aa)) is the Protein kinase domain. Residues 340–348 (LGSGSFGTA) and Lys363 each bind ATP. The Proton acceptor role is filled by Asp457. Thr488 bears the Phosphothreonine mark.

Belongs to the protein kinase superfamily. AGC Ser/Thr protein kinase family.

The enzyme catalyses L-seryl-[protein] + ATP = O-phospho-L-seryl-[protein] + ADP + H(+). It carries out the reaction L-threonyl-[protein] + ATP = O-phospho-L-threonyl-[protein] + ADP + H(+). This Dictyostelium discoideum (Social amoeba) protein is Developmentally-regulated protein kinase 1 (pkaD).